Here is a 602-residue protein sequence, read N- to C-terminus: ATP-dependent lipid A-core flippase (602 aa).

Helical transmembrane passes span 28–48, 84–104, 158–178, 180–200, and 268–288; these read VGIF…QPML, LLII…NYFL, IKVV…LLWM, WHLT…VSIA, and PMLQ…VLFL. The ABC transmembrane type-1 domain occupies 32–323; sequence LLSIVGFVIF…LSEVSSTIQK (292 aa). In terms of domain architecture, ABC transporter spans 355-591; sequence LEVRNLSFTY…NGHYARLHAM (237 aa). An ATP-binding site is contributed by 389–396; that stretch reads GRSGSGKS.

The protein belongs to the ABC transporter superfamily. Lipid exporter (TC 3.A.1.106) family. As to quaternary structure, homodimer.

It localises to the cell inner membrane. It carries out the reaction ATP + H2O + lipid A-core oligosaccharideSide 1 = ADP + phosphate + lipid A-core oligosaccharideSide 2.. Its function is as follows. Involved in lipopolysaccharide (LPS) biosynthesis. Translocates lipid A-core from the inner to the outer leaflet of the inner membrane. Transmembrane domains (TMD) form a pore in the inner membrane and the ATP-binding domain (NBD) is responsible for energy generation. The protein is ATP-dependent lipid A-core flippase of Pseudomonas putida (strain ATCC 47054 / DSM 6125 / CFBP 8728 / NCIMB 11950 / KT2440).